A 495-amino-acid chain; its full sequence is Anaerobic nitric oxide reductase flavorubredoxin (495 aa).

The tract at residues 30–210 is zinc metallo-hydrolase; it reads HKGTSYNSYL…PFSPLVTAKI (181 aa). Positions 79, 81, 83, 147, 166, and 227 each coordinate Fe cation. One can recognise a Flavodoxin-like domain in the interval 254 to 393; it reads ITLFYDSMSN…ECREHGRQLA (140 aa). FMN is bound by residues 260-264 and 342-369; these read SMSNN and AFGS…DISI. Residues 438 to 489 form the Rubredoxin-like domain; sequence DQAMLCTVCQWVYDPAQGEPDQLVAPGTPWAQVPDSFLCPGCGIGKEVFEPC. Residues Cys443, Cys446, Cys476, and Cys479 each coordinate Fe cation.

In the N-terminal section; belongs to the zinc metallo-hydrolase group 3 family. As to quaternary structure, homotetramer. Fe cation is required as a cofactor. The cofactor is FMN.

It is found in the cytoplasm. The protein operates within nitrogen metabolism; nitric oxide reduction. Anaerobic nitric oxide reductase; uses NADH to detoxify nitric oxide (NO), protecting several 4Fe-4S NO-sensitive enzymes. Has at least 2 reductase partners, only one of which (NorW, flavorubredoxin reductase) has been identified. NO probably binds to the di-iron center; electrons enter from the NorW at rubredoxin and are transferred sequentially to the FMN center and the di-iron center. Also able to function as an aerobic oxygen reductase. The polypeptide is Anaerobic nitric oxide reductase flavorubredoxin (Aeromonas hydrophila subsp. hydrophila (strain ATCC 7966 / DSM 30187 / BCRC 13018 / CCUG 14551 / JCM 1027 / KCTC 2358 / NCIMB 9240 / NCTC 8049)).